Here is a 473-residue protein sequence, read N- to C-terminus: Adhesive plaque matrix protein 2 (473 aa).

A signal peptide spans 1–17; it reads MLFSFFLLLTCTQLCLG. 4 positions are modified to 3',4'-dihydroxyphenylalanine: tyrosine 23, tyrosine 31, tyrosine 36, and tyrosine 43. EGF-like domains follow at residues 45–81, 82–117, 118–154, 155–191, 192–228, 229–265, 266–301, 302–340, 342–378, 383–420, and 425–461; these read PVNP…YNCN, LKNA…GRLC, EKNV…GPRC, EVHA…GPTC, QENA…GPEC, ERYV…GPTC, KVNV…GPTC, GENV…PTCE, KPNP…RHCT, and KKNP…RYCS. Cystine bridges form between cysteine 49/cysteine 60, cysteine 54/cysteine 69, cysteine 71/cysteine 80, cysteine 86/cysteine 97, cysteine 91/cysteine 106, cysteine 108/cysteine 117, cysteine 122/cysteine 133, cysteine 127/cysteine 143, cysteine 145/cysteine 154, cysteine 159/cysteine 170, cysteine 164/cysteine 180, cysteine 182/cysteine 191, cysteine 196/cysteine 207, cysteine 201/cysteine 217, cysteine 219/cysteine 228, cysteine 233/cysteine 244, cysteine 238/cysteine 254, cysteine 256/cysteine 265, cysteine 270/cysteine 281, cysteine 275/cysteine 290, cysteine 292/cysteine 301, cysteine 306/cysteine 317, cysteine 311/cysteine 328, cysteine 330/cysteine 339, cysteine 346/cysteine 357, cysteine 351/cysteine 366, cysteine 368/cysteine 377, cysteine 387/cysteine 399, cysteine 393/cysteine 408, cysteine 410/cysteine 419, cysteine 429/cysteine 440, cysteine 434/cysteine 449, and cysteine 451/cysteine 460. Asparagine 93 is a glycosylation site (N-linked (GlcNAc...) asparagine).

Contains L-DOPA (3',4'-dihydroxyphenylalanine). In terms of tissue distribution, produced by the byssal gland.

It localises to the secreted. Its function is as follows. Provides adhesiveness to the mussel's foot. Mussels produce one of the strongest water insoluble glues. The mussel's adhesive is a bundle of threads, called a byssus, formed by a fibrous collagenous core coated with adhesive proteins. The protein is Adhesive plaque matrix protein 2 (FP2) of Mytilus galloprovincialis (Mediterranean mussel).